The primary structure comprises 1063 residues: Structural polyprotein (1063 aa).

A disordered region spans residues methionine 1–alanine 131. The interval glycine 30–glycine 69 is human C1QBP/SF2P32-binding. Serine 46 is modified (phosphoserine; by host). The segment covering proline 59–glycine 69 has biased composition (basic residues). The segment covering glutamine 70–glycine 87 has biased composition (basic and acidic residues). Pro residues predominate over residues alanine 93–proline 107. The cysteines at positions 153 and 197 are disulfide-linked. Residues glycine 279 to alanine 300 form a functions as E2 signal peptide region. At glycine 301–serine 534 the chain is on the extracellular side. 3 N-linked (GlcNAc...) asparagine; by host glycosylation sites follow: asparagine 353, asparagine 371, and asparagine 429. A helical membrane pass occupies residues leucine 535 to cysteine 555. Residues arginine 556–glycine 582 are Cytoplasmic-facing. The interval glycine 563–glycine 582 is functions as E1 signal peptide. At glutamate 583–histidine 1028 the chain is on the extracellular side. 8 disulfides stabilise this stretch: cysteine 590-cysteine 595, cysteine 619-cysteine 824, cysteine 641-cysteine 653, cysteine 699-cysteine 712, cysteine 758-cysteine 767, cysteine 807-cysteine 817, cysteine 931-cysteine 934, and cysteine 950-cysteine 983. Asparagine 658 carries an N-linked (GlcNAc...) asparagine; by host glycan. The Ca(2+) site is built by asparagine 670 and alanine 671. Residues aspartate 718 and threonine 719 each contribute to the Ca(2+) site. Asparagine 791 is a glycosylation site (N-linked (GlcNAc...) asparagine; by host). O-linked (GalNAc...) threonine; by host glycans are attached at residues threonine 1011 and threonine 1012. Residues tryptophan 1029 to cysteine 1049 traverse the membrane as a helical segment. Residues alanine 1050–arginine 1063 lie on the Extracellular side of the membrane.

In terms of assembly, homodimer; further assembles into homooligomer. Interacts with human C1QBP. Interacts (via N-terminus) with protease/methyltransferase p150. As to quaternary structure, heterodimer with spike glycoprotein E2. Heterodimer with spike glycoprotein E1. In terms of processing, structural polyprotein: Specific enzymatic cleavages in vivo yield mature proteins. Two signal peptidase-mediated cleavages within the polyprotein produce the structural proteins capsid, E2, and E1. The E2 signal peptide remains attached to the C-terminus of the capsid protein after cleavage by the signal peptidase. Another signal peptide at E2 C-terminus directs E1 to the ER, with a similar mechanism. Post-translationally, contains three N-linked oligosaccharides. Capsid is phosphorylated on Ser-46 by host. This phosphorylation negatively regulates capsid protein RNA-binding activity. Dephosphorylated by human PP1A.

The protein resides in the virion. It localises to the host cytoplasm. It is found in the host mitochondrion. Its subcellular location is the virion membrane. The protein localises to the host Golgi apparatus membrane. Functionally, capsid protein interacts with genomic RNA and assembles into icosahedric core particles 65-70 nm in diameter. The resulting nucleocapsid eventually associates with the cytoplasmic domain of E2 at the cell membrane, leading to budding and formation of mature virions from host Golgi membranes. Phosphorylation negatively regulates RNA-binding activity, possibly delaying virion assembly during the viral replication phase. Capsid protein dimerizes and becomes disulfide-linked in the virion. Modulates genomic RNA replication. Modulates subgenomic RNA synthesis by interacting with human C1QBP/SF2P32. Induces both perinuclear clustering of mitochondria and the formation of electron-dense intermitochondrial plaques, both hallmarks of rubella virus infected cells. Induces apoptosis when expressed in transfected cells. Responsible for viral attachment to target host cell, by binding to the cell receptor. Its transport to the plasma membrane depends on interaction with E1 protein. The surface glycoproteins display an irregular helical organization and a pseudo-tetrameric inner nucleocapsid arrangement. Its function is as follows. Class II viral fusion protein. Fusion activity is inactive as long as E1 is bound to E2 in mature virion. After virus attachment to target cell and clathrin-mediated endocytosis, acidification of the endosome would induce dissociation of E1/E2 heterodimer and concomitant trimerization of the E1 subunits. This E1 homotrimer is fusion active, and promotes release of viral nucleocapsid in cytoplasm after endosome and viral membrane fusion. The cytoplasmic tail of spike glycoprotein E1 modulates virus release. The surface glycoproteins display an irregular helical organization and a pseudo-tetrameric inner nucleocapsid arrangement. The chain is Structural polyprotein from Rubella virus (strain Cendehill) (RUBV).